Consider the following 256-residue polypeptide: Pimeloyl-[acyl-carrier protein] methyl ester esterase (256 aa).

An AB hydrolase-1 domain is found at 15 to 242 (HLVLLHGWGL…AAHAPFISHP (228 aa)). Substrate-binding positions include tryptophan 22, 82–83 (SL), and 143–147 (FLALQ). The active-site Nucleophile is the serine 82. Active-site residues include aspartate 207 and histidine 235. Histidine 235 provides a ligand contact to substrate.

Belongs to the AB hydrolase superfamily. Carboxylesterase BioH family. Monomer.

Its subcellular location is the cytoplasm. It catalyses the reaction 6-carboxyhexanoyl-[ACP] methyl ester + H2O = 6-carboxyhexanoyl-[ACP] + methanol + H(+). The protein operates within cofactor biosynthesis; biotin biosynthesis. In terms of biological role, the physiological role of BioH is to remove the methyl group introduced by BioC when the pimeloyl moiety is complete. It allows to synthesize pimeloyl-ACP via the fatty acid synthetic pathway through the hydrolysis of the ester bonds of pimeloyl-ACP esters. The sequence is that of Pimeloyl-[acyl-carrier protein] methyl ester esterase from Escherichia fergusonii (strain ATCC 35469 / DSM 13698 / CCUG 18766 / IAM 14443 / JCM 21226 / LMG 7866 / NBRC 102419 / NCTC 12128 / CDC 0568-73).